Here is a 108-residue protein sequence, read N- to C-terminus: Nucleoid-associated protein IL1848 (108 aa).

Disordered regions lie at residues 1 to 26 (MFKGGMGNMMKQAQQMQERMQQAQEE) and 88 to 108 (KERMSEITGGMGLPPGFKMPF). A compositionally biased stretch (low complexity) spans 9 to 26 (MMKQAQQMQERMQQAQEE).

It belongs to the YbaB/EbfC family. Homodimer.

The protein resides in the cytoplasm. The protein localises to the nucleoid. Binds to DNA and alters its conformation. May be involved in regulation of gene expression, nucleoid organization and DNA protection. This Idiomarina loihiensis (strain ATCC BAA-735 / DSM 15497 / L2-TR) protein is Nucleoid-associated protein IL1848.